Consider the following 413-residue polypeptide: Phosphopentomutase (413 aa).

Aspartate 11, aspartate 306, histidine 311, aspartate 347, histidine 348, and histidine 359 together coordinate Mn(2+).

This sequence belongs to the phosphopentomutase family. It depends on Mn(2+) as a cofactor.

Its subcellular location is the cytoplasm. It catalyses the reaction 2-deoxy-alpha-D-ribose 1-phosphate = 2-deoxy-D-ribose 5-phosphate. The enzyme catalyses alpha-D-ribose 1-phosphate = D-ribose 5-phosphate. The protein operates within carbohydrate degradation; 2-deoxy-D-ribose 1-phosphate degradation; D-glyceraldehyde 3-phosphate and acetaldehyde from 2-deoxy-alpha-D-ribose 1-phosphate: step 1/2. Isomerase that catalyzes the conversion of deoxy-ribose 1-phosphate (dRib-1-P) and ribose 1-phosphate (Rib-1-P) to deoxy-ribose 5-phosphate (dRib-5-P) and ribose 5-phosphate (Rib-5-P), respectively. This Helicobacter pylori (strain P12) protein is Phosphopentomutase.